Reading from the N-terminus, the 1005-residue chain is Band 4.1-like protein 2 (1005 aa).

The disordered stretch occupies residues 1 to 80; sequence MTTEVGSVSE…SRGISRFIPP (80 aa). Position 2 is an N-acetylthreonine (Thr2). The residue at position 7 (Ser7) is a Phosphoserine. Residues 22-31 show a composition bias toward basic and acidic residues; it reads ATKEKPKEVA. 3 positions are modified to phosphoserine: Ser39, Ser58, and Ser87. A Phosphothreonine modification is found at Thr89. The interval 93 to 196 is disordered; the sequence is AKDGGDKKEP…GGAAKRETKE (104 aa). Composition is skewed to basic and acidic residues over residues 111-157 and 169-196; these read VLDK…EKPS and VSKE…ETKE. Glycyl lysine isopeptide (Lys-Gly) (interchain with G-Cter in SUMO2) cross-links involve residues Lys140 and Lys144. Phosphoserine occurs at positions 170, 208, 386, 402, 499, 550, 562, 575, 598, and 614. Residues 218 to 499 form the FERM domain; the sequence is VQCKVTLLDG…EHHTFYRLVS (282 aa). The hydrophilic stretch occupies residues 502-610; it reads QPPKAKFLTL…KAPHLQLIEG (109 aa). A spectrin--actin-binding region spans residues 611–676; sequence KKNSLRVEGD…WEKRRITPLS (66 aa). At Tyr623 the chain carries Phosphotyrosine. 2 positions are modified to phosphoserine: Ser627 and Ser647. Positions 652-800 are disordered; that stretch reads KRNFMESTPE…EEAVPEASPV (149 aa). A compositionally biased stretch (polar residues) spans 675-686; the sequence is LSLQTQGSSHET. Over residues 690–711 the composition is skewed to basic and acidic residues; it reads VEEKKRAEVGKDERVITEEMNG. Ser715 and Ser718 each carry phosphoserine. Positions 734–746 are enriched in low complexity; that stretch reads STSLSSESSSSSS. 2 stretches are compositionally biased toward basic and acidic residues: residues 754–770 and 780–793; these read GEYR…IREE and EPRP…REEA. Residue Thr763 is modified to Phosphothreonine. Ser828 carries the phosphoserine modification. The interval 855–1005 is C-terminal (CTD); that stretch reads HVDIDVLPQI…ETELAEEGED (151 aa).

In terms of assembly, interacts with FCGR1A. Interacts with TRPC4. Interacts (via CTD domain) with FKBP2. Interacts with NUMA1; this interaction is negatively regulated by CDK1 during metaphase and promotes anaphase-specific localization of NUMA1 in symmetrically dividing cells. In terms of tissue distribution, widely expressed.

Its subcellular location is the cytoplasm. The protein resides in the cytoskeleton. It localises to the cell cortex. It is found in the cell membrane. Its function is as follows. Required for dynein-dynactin complex and NUMA1 recruitment at the mitotic cell cortex during anaphase. The polypeptide is Band 4.1-like protein 2 (Homo sapiens (Human)).